Here is a 335-residue protein sequence, read N- to C-terminus: Adenosine deaminase (335 aa).

2 residues coordinate Zn(2+): His12 and His14. The substrate site is built by His14 and Asp16. Residue His197 coordinates Zn(2+). Catalysis depends on Glu200, which acts as the Proton donor. Asp278 provides a ligand contact to Zn(2+).

The protein belongs to the metallo-dependent hydrolases superfamily. Adenosine and AMP deaminases family. Adenosine deaminase subfamily. Zn(2+) is required as a cofactor.

It catalyses the reaction adenosine + H2O + H(+) = inosine + NH4(+). It carries out the reaction 2'-deoxyadenosine + H2O + H(+) = 2'-deoxyinosine + NH4(+). Functionally, catalyzes the hydrolytic deamination of adenosine and 2-deoxyadenosine. The chain is Adenosine deaminase from Clostridium botulinum (strain Kyoto / Type A2).